The chain runs to 1196 residues: Phosphatidylinositol-3,5-bisphosphate 3-phosphatase MTMR3 (1196 aa).

Ser8 bears the Phosphoserine mark. Residues 155-576 (EHVTSRFKNE…RNLMLWSAVY (422 aa)) enclose the Myotubularin phosphatase domain. A 1,2-diacyl-sn-glycero-3-phospho-(1D-myo-inositol-3,5-bisphosphate) contacts are provided by Asn326, Asn351, and Ile352. A 1,2-diacyl-sn-glycero-3-phospho-(1D-myo-inositol-3-phosphate) is bound by residues Asn326, Asn351, and Ile352. Cys413 functions as the Phosphocysteine intermediate in the catalytic mechanism. Ser414, Asp415, Gly416, Trp417, Asp418, Arg419, Lys455, and Arg459 together coordinate a 1,2-diacyl-sn-glycero-3-phospho-(1D-myo-inositol-3,5-bisphosphate). The a 1,2-diacyl-sn-glycero-3-phospho-(1D-myo-inositol-3-phosphate) site is built by Ser414, Asp415, Gly416, Trp417, Asp418, and Arg419. Arg459 provides a ligand contact to a 1,2-diacyl-sn-glycero-3-phospho-(1D-myo-inositol-3-phosphate). The segment at 587–612 (DDSCAPYPVPGTSPDEPPLSRLPKTR) is disordered. Residues 593 to 603 (YPVPGTSPDEP) are compositionally biased toward pro residues. Phosphoserine occurs at positions 613, 633, 647, and 651. Disordered stretches follow at residues 697–719 (TKEESGVEEPTHRGHTEVPEVKE) and 855–900 (ESGP…HRTS). Phosphoserine is present on Ser907. A compositionally biased stretch (polar residues) spans 993–1008 (NSHSGRPSTTSSPDQP). The segment at 993-1019 (NSHSGRPSTTSSPDQPSRSHLDDDGMP) is disordered. A coiled-coil region spans residues 1027–1060 (QRLRQIESGHQQEVETLKKQVQELKSRLESQYLT). A Phosphoserine modification is found at Ser1062. The segment at 1117–1177 (DHLAAHCYAC…VCKSCYSSLH (61 aa)) adopts an FYVE-type zinc-finger fold. Zn(2+) contacts are provided by Cys1123, Cys1126, Cys1139, Cys1142, Cys1147, Cys1150, Cys1169, and Cys1172.

This sequence belongs to the protein-tyrosine phosphatase family. Non-receptor class myotubularin subfamily. As to quaternary structure, forms heterodimers with MTMR4 that recruit both CEP55 and PLK1; occurs during early mitosis, regulates the phosphorylation of CEP55 by PLK1 and its recruitment to the midbody where it mediates cell abscission.

It is found in the cytoplasm. The protein resides in the cytosol. It localises to the membrane. The catalysed reaction is a 1,2-diacyl-sn-glycero-3-phospho-(1D-myo-inositol-3,5-bisphosphate) + H2O = a 1,2-diacyl-sn-glycero-3-phospho-(1D-myo-inositol-5-phosphate) + phosphate. The enzyme catalyses a 1,2-diacyl-sn-glycero-3-phospho-(1D-myo-inositol-3-phosphate) + H2O = a 1,2-diacyl-sn-glycero-3-phospho-(1D-myo-inositol) + phosphate. It carries out the reaction 1,2-dihexadecanoyl-sn-glycero-3-phospho-(1D-myo-inositol-3-phosphate) + H2O = 1,2-dihexadecanoyl-sn-glycero-3-phospho-(1D-myo-inositol) + phosphate. It catalyses the reaction 1,2-dioctanoyl-sn-glycero-3-phospho-(1-D-myo-inositol-3-phosphate) + H2O = 1,2-dioctanoyl-sn-glycero-3-phospho-(1D-myo-inositol) + phosphate. The catalysed reaction is 1,2-dihexadecanoyl-sn-glycero-3-phospho-(1D-myo-inositol-3,5-phosphate) + H2O = 1,2-dihexadecanoyl-sn-glycero-3-phospho-(1D-myo-inositol-5-phosphate) + phosphate. Its function is as follows. Lipid phosphatase that specifically dephosphorylates the D-3 position of phosphatidylinositol 3-phosphate and phosphatidylinositol 3,5-bisphosphate, generating phosphatidylinositol and phosphatidylinositol 5-phosphate. Decreases the levels of phosphatidylinositol 3-phosphate, a phospholipid found in cell membranes where it acts as key regulator of both cell signaling and intracellular membrane traffic. Could also have a molecular sequestering/adapter activity and regulate biological processes independently of its phosphatase activity. It includes the regulation of midbody abscission during mitotic cytokinesis. In Mus musculus (Mouse), this protein is Phosphatidylinositol-3,5-bisphosphate 3-phosphatase MTMR3.